The chain runs to 118 residues: Small ribosomal subunit protein uS13 (118 aa).

Residues 94–118 (SLPLRGQRTKTNARTRKGPRKPIRK) are disordered.

This sequence belongs to the universal ribosomal protein uS13 family. As to quaternary structure, part of the 30S ribosomal subunit. Forms a loose heterodimer with protein S19. Forms two bridges to the 50S subunit in the 70S ribosome.

Functionally, located at the top of the head of the 30S subunit, it contacts several helices of the 16S rRNA. In the 70S ribosome it contacts the 23S rRNA (bridge B1a) and protein L5 of the 50S subunit (bridge B1b), connecting the 2 subunits; these bridges are implicated in subunit movement. Contacts the tRNAs in the A and P-sites. The sequence is that of Small ribosomal subunit protein uS13 from Shewanella halifaxensis (strain HAW-EB4).